A 235-amino-acid chain; its full sequence is Phosphoribosylformylglycinamidine synthase subunit PurQ (235 aa).

In terms of domain architecture, Glutamine amidotransferase type-1 spans 4 to 234; that stretch reads GILVFPGTNC…VQHLTGRVIR (231 aa). Residue C86 is the Nucleophile of the active site. Active-site residues include H203 and E205.

Part of the FGAM synthase complex composed of 1 PurL, 1 PurQ and 2 PurS subunits.

The protein resides in the cytoplasm. It catalyses the reaction N(2)-formyl-N(1)-(5-phospho-beta-D-ribosyl)glycinamide + L-glutamine + ATP + H2O = 2-formamido-N(1)-(5-O-phospho-beta-D-ribosyl)acetamidine + L-glutamate + ADP + phosphate + H(+). It carries out the reaction L-glutamine + H2O = L-glutamate + NH4(+). Its pathway is purine metabolism; IMP biosynthesis via de novo pathway; 5-amino-1-(5-phospho-D-ribosyl)imidazole from N(2)-formyl-N(1)-(5-phospho-D-ribosyl)glycinamide: step 1/2. Its function is as follows. Part of the phosphoribosylformylglycinamidine synthase complex involved in the purines biosynthetic pathway. Catalyzes the ATP-dependent conversion of formylglycinamide ribonucleotide (FGAR) and glutamine to yield formylglycinamidine ribonucleotide (FGAM) and glutamate. The FGAM synthase complex is composed of three subunits. PurQ produces an ammonia molecule by converting glutamine to glutamate. PurL transfers the ammonia molecule to FGAR to form FGAM in an ATP-dependent manner. PurS interacts with PurQ and PurL and is thought to assist in the transfer of the ammonia molecule from PurQ to PurL. This is Phosphoribosylformylglycinamidine synthase subunit PurQ from Symbiobacterium thermophilum (strain DSM 24528 / JCM 14929 / IAM 14863 / T).